A 295-amino-acid chain; its full sequence is Glutamyl-Q tRNA(Asp) synthetase (295 aa).

Residues Arg5–Ser9 and Glu41 contribute to the L-glutamate site. Residues Pro8 to Ser18 carry the 'HIGH' region motif. Residues Cys97, Cys99, Tyr117, and Cys121 each contribute to the Zn(2+) site. Residues Tyr178 and Arg196 each coordinate L-glutamate. The short motif at Lys234–Gln238 is the 'KMSKS' region element. ATP is bound at residue Lys237.

The protein belongs to the class-I aminoacyl-tRNA synthetase family. GluQ subfamily. Zn(2+) serves as cofactor.

Its function is as follows. Catalyzes the tRNA-independent activation of glutamate in presence of ATP and the subsequent transfer of glutamate onto a tRNA(Asp). Glutamate is transferred on the 2-amino-5-(4,5-dihydroxy-2-cyclopenten-1-yl) moiety of the queuosine in the wobble position of the QUC anticodon. The protein is Glutamyl-Q tRNA(Asp) synthetase of Neisseria meningitidis serogroup C / serotype 2a (strain ATCC 700532 / DSM 15464 / FAM18).